A 94-amino-acid chain; its full sequence is Aspartyl/glutamyl-tRNA(Asn/Gln) amidotransferase subunit C (94 aa).

It belongs to the GatC family. In terms of assembly, heterotrimer of A, B and C subunits.

The enzyme catalyses L-glutamyl-tRNA(Gln) + L-glutamine + ATP + H2O = L-glutaminyl-tRNA(Gln) + L-glutamate + ADP + phosphate + H(+). It carries out the reaction L-aspartyl-tRNA(Asn) + L-glutamine + ATP + H2O = L-asparaginyl-tRNA(Asn) + L-glutamate + ADP + phosphate + 2 H(+). In terms of biological role, allows the formation of correctly charged Asn-tRNA(Asn) or Gln-tRNA(Gln) through the transamidation of misacylated Asp-tRNA(Asn) or Glu-tRNA(Gln) in organisms which lack either or both of asparaginyl-tRNA or glutaminyl-tRNA synthetases. The reaction takes place in the presence of glutamine and ATP through an activated phospho-Asp-tRNA(Asn) or phospho-Glu-tRNA(Gln). This is Aspartyl/glutamyl-tRNA(Asn/Gln) amidotransferase subunit C from Carboxydothermus hydrogenoformans (strain ATCC BAA-161 / DSM 6008 / Z-2901).